Here is a 341-residue protein sequence, read N- to C-terminus: Glyceraldehyde-3-phosphate dehydrogenase 4 (341 aa).

Residues 13–14, Asp35, and Lys85 each bind NAD(+); that span reads RI. Residues 157 to 159, Thr188, 217 to 218, and Arg240 contribute to the D-glyceraldehyde 3-phosphate site; these read SCT and TG. Residue Cys158 is the Nucleophile of the active site. Asn322 provides a ligand contact to NAD(+).

The protein belongs to the glyceraldehyde-3-phosphate dehydrogenase family. Homotetramer.

Its subcellular location is the cytoplasm. The enzyme catalyses D-glyceraldehyde 3-phosphate + phosphate + NAD(+) = (2R)-3-phospho-glyceroyl phosphate + NADH + H(+). Its pathway is carbohydrate degradation; glycolysis; pyruvate from D-glyceraldehyde 3-phosphate: step 1/5. The chain is Glyceraldehyde-3-phosphate dehydrogenase 4 (gpd-4) from Caenorhabditis elegans.